The chain runs to 234 residues: Sugar fermentation stimulation protein homolog (234 aa).

The protein belongs to the SfsA family.

This Shewanella baltica (strain OS195) protein is Sugar fermentation stimulation protein homolog.